The chain runs to 251 residues: Octanoyltransferase (251 aa).

The BPL/LPL catalytic domain maps to 29–216; it reads GVIQDTLLLL…NFGFIFKEQV (188 aa). Substrate-binding positions include 74-81, 146-148, and 159-161; these read RGGDVTFH, AIG, and GFA. The Acyl-thioester intermediate role is filled by cysteine 177.

Belongs to the LipB family.

The protein localises to the cytoplasm. The catalysed reaction is octanoyl-[ACP] + L-lysyl-[protein] = N(6)-octanoyl-L-lysyl-[protein] + holo-[ACP] + H(+). It functions in the pathway protein modification; protein lipoylation via endogenous pathway; protein N(6)-(lipoyl)lysine from octanoyl-[acyl-carrier-protein]: step 1/2. Catalyzes the transfer of endogenously produced octanoic acid from octanoyl-acyl-carrier-protein onto the lipoyl domains of lipoate-dependent enzymes. Lipoyl-ACP can also act as a substrate although octanoyl-ACP is likely to be the physiological substrate. The sequence is that of Octanoyltransferase from Koribacter versatilis (strain Ellin345).